Consider the following 254-residue polypeptide: Phosphoglycerate mutase 1 (254 aa).

Residues 10 to 17 (RHGESAWN) and 23 to 24 (SG) contribute to the substrate site. The Tele-phosphohistidine intermediate role is filled by H11. Phosphoserine is present on residues S14 and S23. Y26 is subject to Phosphotyrosine. S31 carries the post-translational modification Phosphoserine. Substrate is bound by residues R62, 89–92 (ERHY), and K100. E89 acts as the Proton donor/acceptor in catalysis. K106 bears the N6-acetyllysine mark. Position 116–117 (116–117 (RR)) interacts with substrate. Phosphoserine is present on S118. Position 187 to 188 (187 to 188 (GN)) interacts with substrate. K251 is subject to N6-acetyllysine; alternate. Position 251 is an N6-succinyllysine; alternate (K251). N6-acetyllysine occurs at positions 253 and 254.

This sequence belongs to the phosphoglycerate mutase family. BPG-dependent PGAM subfamily. In terms of assembly, homodimer. Post-translationally, acetylated at Lys-253, Lys-253 and Lys-254 under high glucose condition. Acetylation increases catalytic activity. Under glucose restriction SIRT1 levels dramatically increase and it deacetylates the enzyme.

It catalyses the reaction (2R)-2-phosphoglycerate = (2R)-3-phosphoglycerate. The catalysed reaction is (2R)-3-phospho-glyceroyl phosphate = (2R)-2,3-bisphosphoglycerate + H(+). In terms of biological role, catalyzes the interconversion of 2-phosphoglycerate and 3-phosphoglyceratea crucial step in glycolysis, by using 2,3-bisphosphoglycerate. Also catalyzes the interconversion of (2R)-2,3-bisphosphoglycerate and (2R)-3-phospho-glyceroyl phosphate. The chain is Phosphoglycerate mutase 1 from Pongo abelii (Sumatran orangutan).